The chain runs to 860 residues: DNA mismatch repair protein MutS (860 aa).

607 to 614 serves as a coordination point for ATP; the sequence is GPNMSGKS.

Belongs to the DNA mismatch repair MutS family.

Its function is as follows. This protein is involved in the repair of mismatches in DNA. It is possible that it carries out the mismatch recognition step. This protein has a weak ATPase activity. This chain is DNA mismatch repair protein MutS, found in Listeria monocytogenes serovar 1/2a (strain ATCC BAA-679 / EGD-e).